We begin with the raw amino-acid sequence, 780 residues long: ATP-dependent 6-phosphofructokinase, muscle type (780 aa).

Position 2 is an N-acetylthreonine (Thr-2). The N-terminal catalytic PFK domain 1 stretch occupies residues 2–390 (THEEHHAART…NWEVYKLLAH (389 aa)). Residues Gly-25, 88-89 (RC), and 118-121 (GDGS) each bind ATP. A Mg(2+)-binding site is contributed by Asp-119. Ser-133 is subject to Phosphoserine. Residues 164 to 166 (SID), Arg-201, 208 to 210 (MGR), Glu-264, Arg-292, and 298 to 301 (HVQR) each bind substrate. Catalysis depends on Asp-166, which acts as the Proton acceptor. Ser-377 is subject to Phosphoserine. The segment at 391–401 (IRPPAPKSGSY) is interdomain linker. The interval 402-780 (TVAVMNVGAP…SRKRSGEATV (379 aa)) is C-terminal regulatory PFK domain 2. Beta-D-fructose 2,6-bisphosphate contacts are provided by residues Arg-471 and 528 to 532 (TVSNN). O-linked (GlcNAc) serine glycosylation occurs at Ser-530. Lys-557 carries the post-translational modification N6-(2-hydroxyisobutyryl)lysine. Residues Arg-566, 573–575 (MGG), Glu-629, Arg-655, and 661–664 (HMQQ) contribute to the beta-D-fructose 2,6-bisphosphate site. Ser-667 carries the phosphoserine modification. A beta-D-fructose 2,6-bisphosphate-binding site is contributed by Arg-735. Ser-775 is modified (phosphoserine; by PKA).

The protein belongs to the phosphofructokinase type A (PFKA) family. ATP-dependent PFK group I subfamily. Eukaryotic two domain clade 'E' sub-subfamily. In terms of assembly, homo- and heterotetramers. Phosphofructokinase (PFK) enzyme functions as a tetramer composed of different combinations of 3 types of subunits, called PFKM (M), PFKL (L) and PFKP (P). The composition of the PFK tetramer differs according to the tissue type it is present in. The kinetic and regulatory properties of the tetrameric enzyme are dependent on the subunit composition, hence can vary across tissues. Interacts (via C-terminus) with HK1 (via N-terminal spermatogenic cell-specific region). The cofactor is Mg(2+). GlcNAcylation decreases enzyme activity.

The protein resides in the cytoplasm. The enzyme catalyses beta-D-fructose 6-phosphate + ATP = beta-D-fructose 1,6-bisphosphate + ADP + H(+). Its pathway is carbohydrate degradation; glycolysis; D-glyceraldehyde 3-phosphate and glycerone phosphate from D-glucose: step 3/4. With respect to regulation, allosterically activated by ADP, AMP, or fructose 2,6-bisphosphate, and allosterically inhibited by ATP or citrate. In terms of biological role, catalyzes the phosphorylation of D-fructose 6-phosphate to fructose 1,6-bisphosphate by ATP, the first committing step of glycolysis. The chain is ATP-dependent 6-phosphofructokinase, muscle type (PFKM) from Oryctolagus cuniculus (Rabbit).